The primary structure comprises 367 residues: Homoserine O-acetyltransferase (367 aa).

The AB hydrolase-1 domain occupies 44–350; it reads NVIMVEHAWT…AYGHDAFLLE (307 aa). The active-site Nucleophile is S150. R217 contributes to the substrate binding site. Catalysis depends on residues D311 and H344. Residue D345 coordinates substrate.

It belongs to the AB hydrolase superfamily. MetX family. Homodimer.

It is found in the cytoplasm. The catalysed reaction is L-homoserine + acetyl-CoA = O-acetyl-L-homoserine + CoA. The protein operates within amino-acid biosynthesis; L-methionine biosynthesis via de novo pathway; O-acetyl-L-homoserine from L-homoserine: step 1/1. Functionally, transfers an acetyl group from acetyl-CoA to L-homoserine, forming acetyl-L-homoserine. In vitro, can also use propionyl-CoA or butiryl-CoA as acyl donor. The polypeptide is Homoserine O-acetyltransferase (Trichlorobacter lovleyi (strain ATCC BAA-1151 / DSM 17278 / SZ) (Geobacter lovleyi)).